Here is a 460-residue protein sequence, read N- to C-terminus: Probable serine/threonine-protein kinase kinase DDB_G0280557 (460 aa).

Positions 102–416 (INLKSITDCG…IDQLLAHKYF (315 aa)) constitute a Protein kinase domain. Residues K131 and 154-162 (QRHFQQHPL) each bind ATP. The active-site Proton acceptor is the D250.

Belongs to the protein kinase superfamily. CMGC Ser/Thr protein kinase family. MAP kinase subfamily.

It carries out the reaction L-seryl-[protein] + ATP = O-phospho-L-seryl-[protein] + ADP + H(+). The enzyme catalyses L-threonyl-[protein] + ATP = O-phospho-L-threonyl-[protein] + ADP + H(+). This chain is Probable serine/threonine-protein kinase kinase DDB_G0280557, found in Dictyostelium discoideum (Social amoeba).